The following is a 93-amino-acid chain: Pyrimidine/purine nucleoside phosphorylase (93 aa).

It belongs to the nucleoside phosphorylase PpnP family.

The catalysed reaction is a purine D-ribonucleoside + phosphate = a purine nucleobase + alpha-D-ribose 1-phosphate. The enzyme catalyses adenosine + phosphate = alpha-D-ribose 1-phosphate + adenine. It carries out the reaction cytidine + phosphate = cytosine + alpha-D-ribose 1-phosphate. It catalyses the reaction guanosine + phosphate = alpha-D-ribose 1-phosphate + guanine. The catalysed reaction is inosine + phosphate = alpha-D-ribose 1-phosphate + hypoxanthine. The enzyme catalyses thymidine + phosphate = 2-deoxy-alpha-D-ribose 1-phosphate + thymine. It carries out the reaction uridine + phosphate = alpha-D-ribose 1-phosphate + uracil. It catalyses the reaction xanthosine + phosphate = alpha-D-ribose 1-phosphate + xanthine. Functionally, catalyzes the phosphorolysis of diverse nucleosides, yielding D-ribose 1-phosphate and the respective free bases. Can use uridine, adenosine, guanosine, cytidine, thymidine, inosine and xanthosine as substrates. Also catalyzes the reverse reactions. The chain is Pyrimidine/purine nucleoside phosphorylase from Magnetococcus marinus (strain ATCC BAA-1437 / JCM 17883 / MC-1).